The primary structure comprises 204 residues: MMPSCNRSCSCSRGPSVEDGKWYGVRSYLHLFYEDCAGTALSDDPEGPPVLCPRRPWPSLCWKISLSSGTLLLLLGVAALTTGYAVPPKLEGIGEGEFLVLDQRAADYNQALGTCRLAGTALCVAAGVLLAICLFWAMIGWLSQDTKAEPLDPEADSHVEVFGDEPEQQLSPIFRNASGQSWFSPPASPFGQSSVQTIQPKRDS.

2 helical membrane-spanning segments follow: residues 66 to 86 (LSSG…GYAV) and 122 to 142 (LCVA…IGWL). Positions 178 to 204 (SGQSWFSPPASPFGQSSVQTIQPKRDS) are disordered. The segment covering 190–204 (FGQSSVQTIQPKRDS) has biased composition (polar residues).

The protein belongs to the VMP family.

It is found in the membrane. Its function is as follows. May play a role in maintenance and/or transport of vesicles. This chain is Neurensin-2 (NRSN2), found in Homo sapiens (Human).